A 404-amino-acid polypeptide reads, in one-letter code: 5-aminolevulinate synthase (404 aa).

Positions 21 and 136 each coordinate substrate. Residues S188, H216, and T244 each contribute to the pyridoxal 5'-phosphate site. K247 is an active-site residue. K247 is subject to N6-(pyridoxal phosphate)lysine. The pyridoxal 5'-phosphate site is built by T276 and T277. T362 provides a ligand contact to substrate.

Belongs to the class-II pyridoxal-phosphate-dependent aminotransferase family. As to quaternary structure, homodimer. The cofactor is pyridoxal 5'-phosphate.

It catalyses the reaction succinyl-CoA + glycine + H(+) = 5-aminolevulinate + CO2 + CoA. The protein operates within porphyrin-containing compound metabolism; protoporphyrin-IX biosynthesis; 5-aminolevulinate from glycine: step 1/1. This Rhizobium meliloti (strain 1021) (Ensifer meliloti) protein is 5-aminolevulinate synthase (hemA).